Reading from the N-terminus, the 707-residue chain is Molybdenum cofactor sulfurase (707 aa).

K206 is subject to N6-(pyridoxal phosphate)lysine. C365 is a catalytic residue. The region spanning 558-705 (QWLENALDMT…VEAGSAVRFF (148 aa)) is the MOSC domain.

It belongs to the class-V pyridoxal-phosphate-dependent aminotransferase family. MOCOS subfamily. It depends on pyridoxal 5'-phosphate as a cofactor.

The enzyme catalyses Mo-molybdopterin + L-cysteine + AH2 = thio-Mo-molybdopterin + L-alanine + A + H2O. The protein operates within cofactor biosynthesis; molybdopterin biosynthesis. In terms of biological role, sulfurates the molybdenum cofactor. Sulfation of molybdenum is essential for xanthine dehydrogenase (XDH) and aldehyde oxidase (ADO) enzymes in which molybdenum cofactor is liganded by 1 oxygen and 1 sulfur atom in active form. In Caenorhabditis briggsae, this protein is Molybdenum cofactor sulfurase (mocs-1).